The sequence spans 158 residues: Small ribosomal subunit protein uS7 (158 aa).

This sequence belongs to the universal ribosomal protein uS7 family. In terms of assembly, part of the 30S ribosomal subunit. Contacts proteins S9 and S11.

One of the primary rRNA binding proteins, it binds directly to 16S rRNA where it nucleates assembly of the head domain of the 30S subunit. Is located at the subunit interface close to the decoding center, probably blocks exit of the E-site tRNA. In Gluconobacter oxydans (strain 621H) (Gluconobacter suboxydans), this protein is Small ribosomal subunit protein uS7.